The chain runs to 286 residues: Octanoyltransferase (286 aa).

One can recognise a BPL/LPL catalytic domain in the interval 50 to 278 (LRTPDELWIV…NIAQRHAGVI (229 aa)). Substrate is bound by residues 89 to 96 (RGGQVTWH), 190 to 192 (SLG), and 203 to 205 (GVA). Cys-221 (acyl-thioester intermediate) is an active-site residue.

This sequence belongs to the LipB family.

It is found in the cytoplasm. The enzyme catalyses octanoyl-[ACP] + L-lysyl-[protein] = N(6)-octanoyl-L-lysyl-[protein] + holo-[ACP] + H(+). Its pathway is protein modification; protein lipoylation via endogenous pathway; protein N(6)-(lipoyl)lysine from octanoyl-[acyl-carrier-protein]: step 1/2. Its function is as follows. Catalyzes the transfer of endogenously produced octanoic acid from octanoyl-acyl-carrier-protein onto the lipoyl domains of lipoate-dependent enzymes. Lipoyl-ACP can also act as a substrate although octanoyl-ACP is likely to be the physiological substrate. This Psychrobacter arcticus (strain DSM 17307 / VKM B-2377 / 273-4) protein is Octanoyltransferase.